The following is a 538-amino-acid chain: UPF0761 membrane protein PsycPRwf_0630 (538 aa).

A run of 6 helical transmembrane segments spans residues Leu-43 to Leu-63, Leu-100 to Glu-120, Trp-143 to Val-163, Trp-183 to Ile-203, Ile-215 to Met-235, and Ala-247 to Leu-267. Residues Ser-427–Lys-538 are disordered. Low complexity predominate over residues Pro-482–Lys-493. A compositionally biased stretch (basic and acidic residues) spans Lys-503–Lys-514.

The protein belongs to the UPF0761 family.

The protein localises to the cell inner membrane. The protein is UPF0761 membrane protein PsycPRwf_0630 of Psychrobacter sp. (strain PRwf-1).